The chain runs to 226 residues: MTARPLAELVDPGWADALGPVADQVTKMGEFLREENSSGRGYLPSGANVLRAFTYPLADVRVLIVGQDPYPTPGHAMGLSFSVAADVRPVPRSLGNIFDEYQSDLGLPKPANGDLTPWSEQGVMLLNRVLTVRPGNPASHRGKGWEIVTECAIRALVARDAPLVAILWGRDAATLKPMLGPSVPTIESVHPSPLSASRGFFGSKPFSRANELLVGLGAQPVDWRLP.

The active-site Proton acceptor is aspartate 68.

This sequence belongs to the uracil-DNA glycosylase (UDG) superfamily. UNG family.

It is found in the cytoplasm. It carries out the reaction Hydrolyzes single-stranded DNA or mismatched double-stranded DNA and polynucleotides, releasing free uracil.. Excises uracil residues from the DNA which can arise as a result of misincorporation of dUMP residues by DNA polymerase or due to deamination of cytosine. The protein is Uracil-DNA glycosylase of Mycobacteroides abscessus (strain ATCC 19977 / DSM 44196 / CCUG 20993 / CIP 104536 / JCM 13569 / NCTC 13031 / TMC 1543 / L948) (Mycobacterium abscessus).